An 88-amino-acid chain; its full sequence is Phosphocarrier protein HPr (88 aa).

The 88-residue stretch at 1 to 88 (MKKIQVVVKD…KAVLEKHQVI (88 aa)) folds into the HPr domain. Histidine 15 functions as the Pros-phosphohistidine intermediate in the catalytic mechanism. Residue serine 47 is modified to Phosphoserine; by HPrK/P.

The protein belongs to the HPr family.

The protein localises to the cytoplasm. Phosphorylation on Ser-47 inhibits the phosphoryl transfer from enzyme I to HPr. In terms of biological role, general (non sugar-specific) component of the phosphoenolpyruvate-dependent sugar phosphotransferase system (sugar PTS). This major carbohydrate active-transport system catalyzes the phosphorylation of incoming sugar substrates concomitantly with their translocation across the cell membrane. The phosphoryl group from phosphoenolpyruvate (PEP) is transferred to the phosphoryl carrier protein HPr by enzyme I. Phospho-HPr then transfers it to the PTS EIIA domain. Its function is as follows. P-Ser-HPr interacts with the catabolite control protein A (CcpA), forming a complex that binds to DNA at the catabolite response elements cre, operator sites preceding a large number of catabolite-regulated genes. Thus, P-Ser-HPr is a corepressor in carbon catabolite repression (CCR), a mechanism that allows bacteria to coordinate and optimize the utilization of available carbon sources. P-Ser-HPr also plays a role in inducer exclusion, in which it probably interacts with several non-PTS permeases and inhibits their transport activity. This chain is Phosphocarrier protein HPr (ptsH), found in Mycoplasma pneumoniae (strain ATCC 29342 / M129 / Subtype 1) (Mycoplasmoides pneumoniae).